Consider the following 322-residue polypeptide: Beta-ketoacyl-[acyl-carrier-protein] synthase III (322 aa).

Catalysis depends on residues Cys113 and His249. The interval 250-254 (QANLR) is ACP-binding. Residue Asn279 is part of the active site.

It belongs to the thiolase-like superfamily. FabH family. In terms of assembly, homodimer.

The protein localises to the cytoplasm. The enzyme catalyses malonyl-[ACP] + acetyl-CoA + H(+) = 3-oxobutanoyl-[ACP] + CO2 + CoA. The protein operates within lipid metabolism; fatty acid biosynthesis. Catalyzes the condensation reaction of fatty acid synthesis by the addition to an acyl acceptor of two carbons from malonyl-ACP. Catalyzes the first condensation reaction which initiates fatty acid synthesis and may therefore play a role in governing the total rate of fatty acid production. Possesses both acetoacetyl-ACP synthase and acetyl transacylase activities. Its substrate specificity determines the biosynthesis of branched-chain and/or straight-chain of fatty acids. This is Beta-ketoacyl-[acyl-carrier-protein] synthase III from Granulibacter bethesdensis (strain ATCC BAA-1260 / CGDNIH1).